We begin with the raw amino-acid sequence, 968 residues long: Alanine--tRNA ligase, cytoplasmic (968 aa).

Position 1 is an N-acetylmethionine (M1). Residues S3 and S8 each carry the phosphoserine modification. N6-acetyllysine is present on K19. Residues R77, H95, W176, and 214–216 (IWN) each bind ATP. L-alanine contacts are provided by N216 and D239. G243 contacts ATP. 2 positions are modified to phosphoserine: S399 and S555. Residues H605, H609, C723, and H727 each coordinate Zn(2+). The short motif at 750 to 763 (RRIVAVTGAEAQKA) is the Nuclear localization signal element. Residue K876 is modified to N6-acetyllysine. Residue K943 is modified to N6,N6,N6-trimethyllysine; alternate. The residue at position 943 (K943) is an N6,N6-dimethyllysine; alternate. An N6-methyllysine; alternate modification is found at K943.

It belongs to the class-II aminoacyl-tRNA synthetase family. Monomer. Interacts with ANKRD16; the interaction is direct. Zn(2+) is required as a cofactor. In terms of processing, ISGylated. Methylation at 'Lys-943' by METTL21C.

Its subcellular location is the cytoplasm. It localises to the nucleus. The catalysed reaction is tRNA(Ala) + L-alanine + ATP = L-alanyl-tRNA(Ala) + AMP + diphosphate. The enzyme catalyses (S)-lactate + ATP + H(+) = (S)-lactoyl-AMP + diphosphate. It carries out the reaction (S)-lactoyl-AMP + L-lysyl-[protein] = N(6)-[(S)-lactoyl]-L-lysyl-[protein] + AMP + 2 H(+). The protein lactyltransferase activity is inhibited by beta-alanine. Its function is as follows. Catalyzes the attachment of alanine to tRNA(Ala) in a two-step reaction: alanine is first activated by ATP to form Ala-AMP and then transferred to the acceptor end of tRNA(Ala). Also edits incorrectly charged tRNA(Ala) via its editing domain. In presence of high levels of lactate, also acts as a protein lactyltransferase that mediates lactylation of lysine residues in target proteins, such as TEAD1, TP53/p53 and YAP1. Protein lactylation takes place in a two-step reaction: lactate is first activated by ATP to form lactate-AMP and then transferred to lysine residues of target proteins. Acts as an inhibitor of TP53/p53 activity by catalyzing lactylation of TP53/p53. Acts as a positive regulator of the Hippo pathway by mediating lactylation of TEAD1 and YAP1. This is Alanine--tRNA ligase, cytoplasmic from Homo sapiens (Human).